A 128-amino-acid chain; its full sequence is Early E3 14.5 kDa protein (128 aa).

The protein belongs to the adenoviridae E3_15 family.

Its function is as follows. Protects virus-infected cells from TNF-induced cytolysis. In Human adenovirus C serotype 5 (HAdV-5), this protein is Early E3 14.5 kDa protein.